The primary structure comprises 295 residues: Protease HtpX (295 aa).

A run of 2 helical transmembrane segments spans residues 4–24 (ILLF…TLSL) and 41–61 (GQLL…SLFI). His147 lines the Zn(2+) pocket. Residue Glu148 is part of the active site. His151 serves as a coordination point for Zn(2+). 2 consecutive transmembrane segments (helical) span residues 158-178 (VTMA…ARII) and 198-218 (FVAT…IVMW). Glu224 serves as a coordination point for Zn(2+).

Belongs to the peptidase M48B family. Requires Zn(2+) as cofactor.

The protein localises to the cell inner membrane. This is Protease HtpX from Pseudomonas entomophila (strain L48).